Consider the following 230-residue polypeptide: Dephospho-CoA kinase (230 aa).

Residues 3–206 (LVGLTGGIAS…EPLTWKERLR (204 aa)) form the DPCK domain. Position 8-15 (8-15 (GGIASGKS)) interacts with ATP.

Belongs to the CoaE family.

It catalyses the reaction 3'-dephospho-CoA + ATP = ADP + CoA + H(+). Its pathway is cofactor biosynthesis; coenzyme A biosynthesis; CoA from (R)-pantothenate: step 5/5. In terms of biological role, catalyzes the phosphorylation of the 3'-hydroxyl group of dephosphocoenzyme A to form coenzyme A. In Oryza sativa subsp. japonica (Rice), this protein is Dephospho-CoA kinase.